We begin with the raw amino-acid sequence, 213 residues long: ATP synthase peripheral stalk subunit OSCP, mitochondrial (213 aa).

Residues 1 to 23 (MATPAVSGLSRQVRCFSTSVVRP) constitute a mitochondrion transit peptide. The short motif at 5–23 (AVSGLSRQVRCFSTSVVRP) is the SIFI-degron element. Lys-54, Lys-60, Lys-70, and Lys-73 each carry N6-acetyllysine. An N6-succinyllysine modification is found at Lys-90. Lys-158 and Lys-162 each carry N6-acetyllysine; alternate. Lys-158 and Lys-162 each carry N6-succinyllysine; alternate. N6-acetyllysine occurs at positions 172, 176, and 192. At Lys-199 the chain carries N6-succinyllysine.

It belongs to the ATPase delta chain family. In terms of assembly, component of the ATP synthase complex composed at least of ATP5F1A/subunit alpha, ATP5F1B/subunit beta, ATP5MC1/subunit c (homooctomer), MT-ATP6/subunit a, MT-ATP8/subunit 8, ATP5ME/subunit e, ATP5MF/subunit f, ATP5MG/subunit g, ATP5MK/subunit k, ATP5MJ/subunit j, ATP5F1C/subunit gamma, ATP5F1D/subunit delta, ATP5F1E/subunit epsilon, ATP5PF/subunit F6, ATP5PB/subunit b, ATP5PD/subunit d, ATP5PO/subunit OSCP. ATP synthase complex consists of a soluble F(1) head domain (subunits alpha(3) and beta(3)) - the catalytic core - and a membrane F(0) domain - the membrane proton channel (subunits c, a, 8, e, f, g, k and j). These two domains are linked by a central stalk (subunits gamma, delta, and epsilon) rotating inside the F1 region and a stationary peripheral stalk (subunits F6, b, d, and OSCP). Post-translationally, acetylation at Lys-162 decreases ATP production. Deacetylated by SIRT3. In response to mitochondrial stress, the precursor protein is ubiquitinated by the SIFI complex in the cytoplasm before mitochondrial import, leading to its degradation. Within the SIFI complex, UBR4 initiates ubiquitin chain that are further elongated or branched by KCMF1.

It localises to the mitochondrion. The protein resides in the mitochondrion inner membrane. Its function is as follows. Subunit OSCP, of the mitochondrial membrane ATP synthase complex (F(1)F(0) ATP synthase or Complex V) that produces ATP from ADP in the presence of a proton gradient across the membrane which is generated by electron transport complexes of the respiratory chain. ATP synthase complex consist of a soluble F(1) head domain - the catalytic core - and a membrane F(1) domain - the membrane proton channel. These two domains are linked by a central stalk rotating inside the F(1) region and a stationary peripheral stalk. During catalysis, ATP synthesis in the catalytic domain of F(1) is coupled via a rotary mechanism of the central stalk subunits to proton translocation. In vivo, can only synthesize ATP although its ATP hydrolase activity can be activated artificially in vitro. Part of the complex F(0) domain. Part of the complex F(0) domain and the peripheric stalk, which acts as a stator to hold the catalytic alpha(3)beta(3) subcomplex and subunit a/ATP6 static relative to the rotary elements. The sequence is that of ATP synthase peripheral stalk subunit OSCP, mitochondrial from Pongo abelii (Sumatran orangutan).